A 485-amino-acid polypeptide reads, in one-letter code: Phosphoglucosamine mutase (485 aa).

The Phosphoserine intermediate role is filled by Ser133. Ser133, Asp274, Asp276, and Asp278 together coordinate Mg(2+). Ser133 is subject to Phosphoserine.

The protein belongs to the phosphohexose mutase family. Mg(2+) serves as cofactor. Post-translationally, activated by phosphorylation.

It catalyses the reaction alpha-D-glucosamine 1-phosphate = D-glucosamine 6-phosphate. Its function is as follows. Catalyzes the conversion of glucosamine-6-phosphate to glucosamine-1-phosphate. This is Phosphoglucosamine mutase from Rippkaea orientalis (strain PCC 8801 / RF-1) (Cyanothece sp. (strain PCC 8801)).